Here is a 327-residue protein sequence, read N- to C-terminus: o-succinylbenzoate synthase (327 aa).

Residue Lys110 is the Proton donor of the active site. Positions 138, 165, and 188 each coordinate Mg(2+). The active-site Proton acceptor is Lys212.

This sequence belongs to the mandelate racemase/muconate lactonizing enzyme family. MenC type 1 subfamily. A divalent metal cation serves as cofactor.

The enzyme catalyses (1R,6R)-6-hydroxy-2-succinyl-cyclohexa-2,4-diene-1-carboxylate = 2-succinylbenzoate + H2O. Its pathway is quinol/quinone metabolism; 1,4-dihydroxy-2-naphthoate biosynthesis; 1,4-dihydroxy-2-naphthoate from chorismate: step 4/7. It participates in quinol/quinone metabolism; menaquinone biosynthesis. Functionally, converts 2-succinyl-6-hydroxy-2,4-cyclohexadiene-1-carboxylate (SHCHC) to 2-succinylbenzoate (OSB). The protein is o-succinylbenzoate synthase of Mycobacterium marinum (strain ATCC BAA-535 / M).